Consider the following 499-residue polypeptide: Glycerol kinase (499 aa).

Thr-12 serves as a coordination point for ADP. ATP-binding residues include Thr-12, Thr-13, and Ser-14. Thr-12 contributes to the sn-glycerol 3-phosphate binding site. Arg-16 is an ADP binding site. Sn-glycerol 3-phosphate-binding residues include Arg-82, Glu-83, Tyr-134, and Asp-240. The glycerol site is built by Arg-82, Glu-83, Tyr-134, Asp-240, and Gln-241. Residues Thr-262 and Gly-306 each coordinate ADP. Residues Thr-262, Gly-306, Gln-310, and Gly-412 each coordinate ATP. The ADP site is built by Gly-412 and Asn-416.

This sequence belongs to the FGGY kinase family.

It carries out the reaction glycerol + ATP = sn-glycerol 3-phosphate + ADP + H(+). The protein operates within polyol metabolism; glycerol degradation via glycerol kinase pathway; sn-glycerol 3-phosphate from glycerol: step 1/1. Inhibited by fructose 1,6-bisphosphate (FBP). Its function is as follows. Key enzyme in the regulation of glycerol uptake and metabolism. Catalyzes the phosphorylation of glycerol to yield sn-glycerol 3-phosphate. This is Glycerol kinase from Nocardia farcinica (strain IFM 10152).